The following is a 400-amino-acid chain: 1-deoxy-D-xylulose 5-phosphate reductoisomerase (400 aa).

T10, G11, S12, I13, G36, N38, and N124 together coordinate NADPH. K125 serves as a coordination point for 1-deoxy-D-xylulose 5-phosphate. Residue E126 coordinates NADPH. D150 contributes to the Mn(2+) binding site. 1-deoxy-D-xylulose 5-phosphate contacts are provided by S151, E152, S186, and H209. Residue E152 participates in Mn(2+) binding. G215 serves as a coordination point for NADPH. 4 residues coordinate 1-deoxy-D-xylulose 5-phosphate: S222, N227, K228, and E231. E231 contacts Mn(2+).

The protein belongs to the DXR family. It depends on Mg(2+) as a cofactor. The cofactor is Mn(2+).

It catalyses the reaction 2-C-methyl-D-erythritol 4-phosphate + NADP(+) = 1-deoxy-D-xylulose 5-phosphate + NADPH + H(+). Its pathway is isoprenoid biosynthesis; isopentenyl diphosphate biosynthesis via DXP pathway; isopentenyl diphosphate from 1-deoxy-D-xylulose 5-phosphate: step 1/6. Functionally, catalyzes the NADPH-dependent rearrangement and reduction of 1-deoxy-D-xylulose-5-phosphate (DXP) to 2-C-methyl-D-erythritol 4-phosphate (MEP). The sequence is that of 1-deoxy-D-xylulose 5-phosphate reductoisomerase from Aliivibrio fischeri (strain MJ11) (Vibrio fischeri).